A 639-amino-acid polypeptide reads, in one-letter code: UvrABC system protein C (639 aa).

The GIY-YIG domain occupies 20–97 (ERSGVYRMFD…IKKFQPKFNI (78 aa)). The UVR domain occupies 207–242 (KELQENLSRKMEELSSQMRFEEAAEIRDRIKALSYV).

The protein belongs to the UvrC family. As to quaternary structure, interacts with UvrB in an incision complex.

It localises to the cytoplasm. Functionally, the UvrABC repair system catalyzes the recognition and processing of DNA lesions. UvrC both incises the 5' and 3' sides of the lesion. The N-terminal half is responsible for the 3' incision and the C-terminal half is responsible for the 5' incision. In Rickettsia peacockii (strain Rustic), this protein is UvrABC system protein C.